We begin with the raw amino-acid sequence, 382 residues long: Ferredoxin--NADP reductase, root isozyme 2, chloroplastic (382 aa).

Residues 1–64 constitute a chloroplast transit peptide; that stretch reads MSHSAVSQAG…DGKRYPSTTI (64 aa). The region spanning 97-225 is the FAD-binding FR-type domain; the sequence is KESYTAKIVS…TGPSGKVMLL (129 aa). A disulfide bond links cysteine 200 and cysteine 205. Position 201 is a phosphoserine (serine 201). At threonine 233 the chain carries Phosphothreonine. 235–253 is a binding site for NADP(+); that stretch reads IMIATGTGVAPYRGYLRRM.

Belongs to the ferredoxin--NADP reductase type 1 family. The cofactor is FAD. As to expression, expressed in shoots and roots. More abundant in roots than RFNR1.

The protein localises to the plastid. Its subcellular location is the chloroplast. The catalysed reaction is 2 reduced [2Fe-2S]-[ferredoxin] + NADP(+) + H(+) = 2 oxidized [2Fe-2S]-[ferredoxin] + NADPH. Its function is as follows. Maintains the supply of reduced ferredoxin under non-photosynthetic conditions. The protein is Ferredoxin--NADP reductase, root isozyme 2, chloroplastic (RFNR2) of Arabidopsis thaliana (Mouse-ear cress).